The following is a 628-amino-acid chain: ATP-dependent RNA helicase mrh4, mitochondrial (628 aa).

A mitochondrion-targeting transit peptide spans 1–40; it reads MSLAVRPPVCLLCRSGAPTLLPSSVSQVARSMATARLRRK. Residues 51–109 are disordered; sequence AKSSINQKRSGKAKFGPWSGMNQTEAHIRGEPRSRSQAALRRSGEKAADTPRKSDSPLY. Residues 92 to 105 are compositionally biased toward basic and acidic residues; that stretch reads RSGEKAADTPRKSD. The Q motif motif lies at 137–170; the sequence is TSFDHFPLLPVVRHSIFSQALPGLVDVTPTPIQR. The Helicase ATP-binding domain occupies 190-402; that stretch reads EDGDPQYDQY…RKRYPDIKRL (213 aa). 203–210 contributes to the ATP binding site; it reads AETGSGKT. Over residues 228 to 253 the composition is skewed to basic and acidic residues; sequence DKENERKEEERKAKEKEERLKNRAFD. A disordered region spans residues 228 to 260; it reads DKENERKEEERKAKEKEERLKNRAFDLEPEEPP. Positions 349 to 352 match the DEAD box motif; sequence DEAD. The 173-residue stretch at 456–628 folds into the Helicase C-terminal domain; it reads YVGPNIKKIL…EGMFRGQALI (173 aa).

It belongs to the DEAD box helicase family. MRH4 subfamily.

It localises to the mitochondrion. The enzyme catalyses ATP + H2O = ADP + phosphate + H(+). Its function is as follows. ATP-binding RNA helicase involved in mitochondrial RNA metabolism. Required for maintenance of mitochondrial DNA. This Aspergillus oryzae (strain ATCC 42149 / RIB 40) (Yellow koji mold) protein is ATP-dependent RNA helicase mrh4, mitochondrial (mrh4).